The chain runs to 223 residues: Ribose-5-phosphate isomerase A (223 aa).

Residues 32–35, 83–86, and 96–99 each bind substrate; these read TGST, DGAD, and KGGG. Glu105 serves as the catalytic Proton acceptor. Lys123 is a substrate binding site.

The protein belongs to the ribose 5-phosphate isomerase family. In terms of assembly, homodimer.

It carries out the reaction aldehydo-D-ribose 5-phosphate = D-ribulose 5-phosphate. The protein operates within carbohydrate degradation; pentose phosphate pathway; D-ribose 5-phosphate from D-ribulose 5-phosphate (non-oxidative stage): step 1/1. In terms of biological role, catalyzes the reversible conversion of ribose-5-phosphate to ribulose 5-phosphate. The sequence is that of Ribose-5-phosphate isomerase A from Acinetobacter baumannii (strain ATCC 17978 / DSM 105126 / CIP 53.77 / LMG 1025 / NCDC KC755 / 5377).